We begin with the raw amino-acid sequence, 466 residues long: Delta-1 crystallin (466 aa).

This sequence belongs to the lyase 1 family. Argininosuccinate lyase subfamily. As to quaternary structure, homotetramer. In terms of tissue distribution, eye lens.

Its function is as follows. Delta crystallin, the principal crystallin in embryonic lens, is found only in birds and reptiles. The protein is Delta-1 crystallin (ASL1) of Meleagris gallopavo (Wild turkey).